A 103-amino-acid polypeptide reads, in one-letter code: UPF0298 protein LACR_0404 (103 aa).

It belongs to the UPF0298 family.

It is found in the cytoplasm. The polypeptide is UPF0298 protein LACR_0404 (Lactococcus lactis subsp. cremoris (strain SK11)).